The chain runs to 482 residues: 3-isopropylmalate dehydratase large subunit (482 aa).

Positions alanine 60–serine 79 are disordered. [4Fe-4S] cluster-binding residues include cysteine 353, cysteine 414, and cysteine 417.

Belongs to the aconitase/IPM isomerase family. LeuC type 1 subfamily. In terms of assembly, heterodimer of LeuC and LeuD. [4Fe-4S] cluster is required as a cofactor.

The catalysed reaction is (2R,3S)-3-isopropylmalate = (2S)-2-isopropylmalate. It participates in amino-acid biosynthesis; L-leucine biosynthesis; L-leucine from 3-methyl-2-oxobutanoate: step 2/4. In terms of biological role, catalyzes the isomerization between 2-isopropylmalate and 3-isopropylmalate, via the formation of 2-isopropylmaleate. The protein is 3-isopropylmalate dehydratase large subunit of Xanthomonas euvesicatoria pv. vesicatoria (strain 85-10) (Xanthomonas campestris pv. vesicatoria).